A 93-amino-acid chain; its full sequence is U12-lycotoxin-Ls1a (93 aa).

The signal sequence occupies residues 1–18 (MKFAVILLFSLVVLAVAS). A propeptide spanning residues 19 to 38 (ESVEEVRREIDIEDLPEQQR) is cleaved from the precursor.

It belongs to the neurotoxin 31 family. Post-translationally, contains 5 disulfide bonds. As to expression, expressed by the venom gland.

Its subcellular location is the secreted. This is U12-lycotoxin-Ls1a from Lycosa singoriensis (Wolf spider).